Reading from the N-terminus, the 557-residue chain is Probable phenylalanine--tRNA ligase beta subunit (557 aa).

A B5 domain is found at 276–352; it reads MHNRSYVMGL…IAHGFNNFRR (77 aa). Mg(2+)-binding residues include Asp-330, Asp-336, Glu-339, and Asp-340.

The protein belongs to the phenylalanyl-tRNA synthetase beta subunit family. Type 2 subfamily. As to quaternary structure, tetramer of two alpha and two beta subunits. Requires Mg(2+) as cofactor.

The protein resides in the cytoplasm. It catalyses the reaction tRNA(Phe) + L-phenylalanine + ATP = L-phenylalanyl-tRNA(Phe) + AMP + diphosphate + H(+). The polypeptide is Probable phenylalanine--tRNA ligase beta subunit (Encephalitozoon cuniculi (strain GB-M1) (Microsporidian parasite)).